Consider the following 282-residue polypeptide: MAENADLVEWPKKDKRRFLHVVYRVGDLDRTIQFYTECFGMKVLRKRDVPEEKYSNAFLGFGPETSNFVVELTYNYGVSSYDIGTGFGHFAISTQDVSKMVEAVRAKGGNVTREPGPVKGGGSVIAFVKDPDGYTFELIQRGPTPEPLCQVMLRVGDLDRAVKFMEKALGMRLLRRIERPEYNTIGMMGYAEEYESIVLELTYNYGVTEYTKGNAYAQIAIGTDDVYKSAEVVKIVNQELGGKITREAGPLPGLGTKIVSFLDPDGWKQVLVDNEDFLKELE.

Residue Ala-2 is modified to N-acetylalanine. VOC domains are found at residues 17–141 (RFLH…LIQR) and 147–274 (PLCQ…LVDN). His-20 is a Zn(2+) binding site. A substrate-binding site is contributed by Arg-24. Glu-71 provides a ligand contact to Zn(2+). Substrate contacts are provided by Asn-75 and His-89. The Zn(2+) site is built by His-89 and Glu-137. Glu-137 acts as the Proton donor/acceptor in catalysis. 254–255 (LG) is a binding site for substrate.

It belongs to the glyoxalase I family. The cofactor is Zn(2+).

It carries out the reaction (R)-S-lactoylglutathione = methylglyoxal + glutathione. Its pathway is secondary metabolite metabolism; methylglyoxal degradation; (R)-lactate from methylglyoxal: step 1/2. In terms of biological role, catalyzes the conversion of hemimercaptal, formed from methylglyoxal and glutathione, to S-lactoylglutathione. This Brassica oleracea var. gemmifera (Brussel sprouts) protein is Putative lactoylglutathione lyase.